The primary structure comprises 282 residues: Snake venom serine protease NaSP (282 aa).

The first 18 residues, 1 to 18 (MVLIRVLASLLILQLSYS), serve as a signal peptide directing secretion. Positions 19–56 (KSLDDGAKESAYDDEIQQSSWGNSTVNTTLTETVVIQL) are excised as a propeptide. Asparagine 41 and asparagine 45 each carry an N-linked (GlcNAc...) asparagine glycan. The Peptidase S1 domain maps to 57–280 (IMGGSECYKS…YIDWIRGIIA (224 aa)). 5 disulfides stabilise this stretch: cysteine 63–cysteine 195, cysteine 82–cysteine 98, cysteine 174–cysteine 241, cysteine 206–cysteine 220, and cysteine 231–cysteine 256. The active-site Charge relay system is the histidine 97. Asparagine 135 carries N-linked (GlcNAc...) asparagine glycosylation. The active-site Charge relay system is the aspartate 142. Asparagine 149 and asparagine 153 each carry an N-linked (GlcNAc...) asparagine glycan. Serine 235 functions as the Charge relay system in the catalytic mechanism.

Belongs to the peptidase S1 family. Snake venom subfamily. As to quaternary structure, monomer. Expressed by the venom gland.

Its subcellular location is the secreted. In terms of biological role, snake venom serine protease that may act in the hemostasis system of the prey. The chain is Snake venom serine protease NaSP from Naja atra (Chinese cobra).